The following is a 287-amino-acid chain: MSDTSDLVDGKWQRLPPVPEGMSKSQWKKQWRRQMYEAKKEEYAEVRKEKRKRAKENRRKKIQEYIDRGEEVPAELKREPRVNRDQVASGINIILDCAFDDLMNDKEIVSTSNQITRAYSANRRASQYANITVTSFNKRLKERFDKALDDCNYPQWQNFKFVSDEKLITEGDKSKMVYLTADTEEQLDTLEPGMTYIVGGIVDKNRHKLLCYNKAKELGIPTRRLPIGEYIKIEGRKVLTTTHVIQLMLKYCESRDWKESFESVIPSRKLDPVKEKEQQQQQQQQQQ.

A disordered region spans residues 1 to 27 (MSDTSDLVDGKWQRLPPVPEGMSKSQW). Residues 79 to 272 (EPRVNRDQVA…SVIPSRKLDP (194 aa)) enclose the SAM-dependent MTase TRM10-type domain. S-adenosyl-L-methionine contacts are provided by residues 179–180 (LT), Gly-199, 203–207 (DKNRH), Cys-211, Leu-225, and 237–239 (KVL). The active-site Proton acceptor is Asp-203. Residues 268–278 (RKLDPVKEKEQ) show a composition bias toward basic and acidic residues. Positions 268–287 (RKLDPVKEKEQQQQQQQQQQ) are disordered.

This sequence belongs to the class IV-like SAM-binding methyltransferase superfamily. TRM10 family. Monomer.

It is found in the cytoplasm. It localises to the nucleus. The enzyme catalyses guanosine(9) in tRNA + S-adenosyl-L-methionine = N(1)-methylguanosine(9) in tRNA + S-adenosyl-L-homocysteine + H(+). Its function is as follows. S-adenosyl-L-methionine-dependent guanine N(1)-methyltransferase that catalyzes the formation of N(1)-methylguanine at position 9 (m1G9) in cytoplasmic tRNA. The chain is tRNA (guanine(9)-N1)-methyltransferase from Candida glabrata (strain ATCC 2001 / BCRC 20586 / JCM 3761 / NBRC 0622 / NRRL Y-65 / CBS 138) (Yeast).